The following is a 345-amino-acid chain: Eukaryotic translation initiation factor 3 subunit F (345 aa).

Positions 30–166 (VVIHPQALFS…TRAYISAPVG (137 aa)) constitute an MPN domain. The segment at 308-345 (GGESGNAESGQRGGQRGGKGGRGGQQRTQDRSGEEARA) is disordered. Positions 318–331 (QRGGQRGGKGGRGG) are enriched in gly residues. Residues 335-345 (TQDRSGEEARA) show a composition bias toward basic and acidic residues.

Belongs to the eIF-3 subunit F family. In terms of assembly, component of the eukaryotic translation initiation factor 3 (eIF-3) complex.

It localises to the cytoplasm. Component of the eukaryotic translation initiation factor 3 (eIF-3) complex, which is involved in protein synthesis of a specialized repertoire of mRNAs and, together with other initiation factors, stimulates binding of mRNA and methionyl-tRNAi to the 40S ribosome. The eIF-3 complex specifically targets and initiates translation of a subset of mRNAs involved in cell proliferation. This Aspergillus oryzae (strain ATCC 42149 / RIB 40) (Yellow koji mold) protein is Eukaryotic translation initiation factor 3 subunit F.